A 607-amino-acid chain; its full sequence is Probable LRR receptor-like serine/threonine-protein kinase At5g65240 (607 aa).

A signal peptide spans 1 to 24 (MALLIITALVFSSLWSSVSPDAQG). At 25–219 (DALFALRSSL…SGDSSSRKTG (195 aa)) the chain is on the extracellular side. 2 N-linked (GlcNAc...) asparagine glycosylation sites follow: N74 and N110. 4 LRR repeats span residues 87–111 (LTTL…IGNL), 112–135 (SSLT…LGNL), 137–159 (NLQF…LTGL), and 160–183 (SKLI…LFKI). 4 N-linked (GlcNAc...) asparagine glycosylation sites follow: N149, N171, N187, and N192. Residues 220 to 240 (IIAGVVSGIAVILLGFFFFFF) form a helical membrane-spanning segment. Residues 241 to 607 (CKDKHKGYKR…QDAIELSGGR (367 aa)) are Cytoplasmic-facing. T281 carries the post-translational modification Phosphothreonine. In terms of domain architecture, Protein kinase spans 284–568 (FSEKNVLGQG…EGEGLAERWE (285 aa)). 290 to 298 (LGQGGFGKV) serves as a coordination point for ATP. At T307 the chain carries Phosphothreonine. K312 serves as a coordination point for ATP. The residue at position 365 (S365) is a Phosphoserine. D411 functions as the Proton acceptor in the catalytic mechanism. Phosphothreonine is present on residues T444, T445, and T450. Residue S460 is modified to Phosphoserine. At T461 the chain carries Phosphothreonine. Phosphoserine is present on S465. T541 bears the Phosphothreonine mark.

It belongs to the protein kinase superfamily. Ser/Thr protein kinase family.

It localises to the cell membrane. The enzyme catalyses L-seryl-[protein] + ATP = O-phospho-L-seryl-[protein] + ADP + H(+). It carries out the reaction L-threonyl-[protein] + ATP = O-phospho-L-threonyl-[protein] + ADP + H(+). The chain is Probable LRR receptor-like serine/threonine-protein kinase At5g65240 from Arabidopsis thaliana (Mouse-ear cress).